The sequence spans 174 residues: Nucleoside-triphosphatase THEP1 (174 aa).

ATP is bound by residues 7 to 14 and 94 to 101; these read GRPGVGKT and LIIVDEIG.

The protein belongs to the THEP1 NTPase family.

It catalyses the reaction a ribonucleoside 5'-triphosphate + H2O = a ribonucleoside 5'-diphosphate + phosphate + H(+). Has nucleotide phosphatase activity towards ATP, GTP, CTP, TTP and UTP. May hydrolyze nucleoside diphosphates with lower efficiency. The sequence is that of Nucleoside-triphosphatase THEP1 from Thermotoga maritima (strain ATCC 43589 / DSM 3109 / JCM 10099 / NBRC 100826 / MSB8).